We begin with the raw amino-acid sequence, 365 residues long: Iron-sulfur cluster assembly protein SufC (365 aa).

An ABC transporter domain is found at 118–364 (LEINDLHAIE…ESDGYAQFVE (247 aa)). Position 152–159 (152–159 (GRNGSGKS)) interacts with ATP.

The protein belongs to the ABC transporter superfamily. Ycf16 family. Component of a complex composed of SufB, SufC and SufD in a stoichiometric ratio of 1:2:1. Interacts with SufB. Interacts with SufD; the interaction enhances the ATPase activity of SufC.

It is found in the plastid. The protein resides in the apicoplast. The catalysed reaction is ATP + H2O = ADP + phosphate + H(+). The protein operates within cofactor biosynthesis; iron-sulfur cluster biosynthesis. Its function is as follows. Participates in the sulfur mobilization (SUF) pathway for iron-sulfur (Fe-S) cluster biogenesis. As part of a complex consisting of SufB-SufC(2)-SufD, involved in assembly of [4Fe-4S] clusters. Exhibits ATPase activity. The chain is Iron-sulfur cluster assembly protein SufC from Plasmodium berghei (strain Anka).